A 533-amino-acid chain; its full sequence is 2-isopropylmalate synthase (533 aa).

Residues I8–A269 form the Pyruvate carboxyltransferase domain. Residues D17, H208, H210, and N244 each contribute to the Mn(2+) site. A regulatory domain region spans residues R408 to L533.

The protein belongs to the alpha-IPM synthase/homocitrate synthase family. LeuA type 1 subfamily. As to quaternary structure, homodimer. Mn(2+) is required as a cofactor.

Its subcellular location is the cytoplasm. The enzyme catalyses 3-methyl-2-oxobutanoate + acetyl-CoA + H2O = (2S)-2-isopropylmalate + CoA + H(+). The protein operates within amino-acid biosynthesis; L-leucine biosynthesis; L-leucine from 3-methyl-2-oxobutanoate: step 1/4. Catalyzes the condensation of the acetyl group of acetyl-CoA with 3-methyl-2-oxobutanoate (2-ketoisovalerate) to form 3-carboxy-3-hydroxy-4-methylpentanoate (2-isopropylmalate). This chain is 2-isopropylmalate synthase, found in Synechocystis sp. (strain ATCC 27184 / PCC 6803 / Kazusa).